The chain runs to 73 residues: EAGIECDCGSPENPCCDAATCKLRPGAQCADGLCCDQCRFIKKGKICRRARGDNPDDRCTGQSADCPRNRFHA.

Positions 1–73 (EAGIECDCGS…ADCPRNRFHA (73 aa)) constitute a Disintegrin domain. Intrachain disulfides connect C6–C21, C8–C16, C15–C38, C29–C35, C34–C59, and C47–C66. Positions 51–53 (RGD) match the Cell attachment site motif.

Belongs to the venom metalloproteinase (M12B) family. P-II subfamily. P-IIa sub-subfamily. As to quaternary structure, monomer (disintegrin). Expressed by the venom gland.

It localises to the secreted. Functionally, inhibits fibrinogen interaction with platelets. Acts by binding to alpha-IIb/beta-3 (ITGA2B/ITGB3) on the platelet surface and inhibits aggregation induced by ADP, thrombin, platelet-activating factor and collagen. This chain is Disintegrin molossin, found in Crotalus molossus molossus (Northern black-tailed rattlesnake).